A 282-amino-acid polypeptide reads, in one-letter code: 4-hydroxy-3-methylbut-2-enyl diphosphate reductase (282 aa).

Cysteine 14 lines the [4Fe-4S] cluster pocket. Residues histidine 43 and histidine 78 each coordinate (2E)-4-hydroxy-3-methylbut-2-enyl diphosphate. Dimethylallyl diphosphate contacts are provided by histidine 43 and histidine 78. Residues histidine 43 and histidine 78 each coordinate isopentenyl diphosphate. Position 100 (cysteine 100) interacts with [4Fe-4S] cluster. A (2E)-4-hydroxy-3-methylbut-2-enyl diphosphate-binding site is contributed by histidine 128. Histidine 128 lines the dimethylallyl diphosphate pocket. Histidine 128 is a binding site for isopentenyl diphosphate. The active-site Proton donor is the glutamate 130. Threonine 164 provides a ligand contact to (2E)-4-hydroxy-3-methylbut-2-enyl diphosphate. [4Fe-4S] cluster is bound at residue cysteine 192. Residues serine 220, serine 221, asparagine 222, and serine 266 each contribute to the (2E)-4-hydroxy-3-methylbut-2-enyl diphosphate site. Residues serine 220, serine 221, asparagine 222, and serine 266 each coordinate dimethylallyl diphosphate. 4 residues coordinate isopentenyl diphosphate: serine 220, serine 221, asparagine 222, and serine 266.

This sequence belongs to the IspH family. [4Fe-4S] cluster serves as cofactor.

It carries out the reaction isopentenyl diphosphate + 2 oxidized [2Fe-2S]-[ferredoxin] + H2O = (2E)-4-hydroxy-3-methylbut-2-enyl diphosphate + 2 reduced [2Fe-2S]-[ferredoxin] + 2 H(+). The catalysed reaction is dimethylallyl diphosphate + 2 oxidized [2Fe-2S]-[ferredoxin] + H2O = (2E)-4-hydroxy-3-methylbut-2-enyl diphosphate + 2 reduced [2Fe-2S]-[ferredoxin] + 2 H(+). Its pathway is isoprenoid biosynthesis; dimethylallyl diphosphate biosynthesis; dimethylallyl diphosphate from (2E)-4-hydroxy-3-methylbutenyl diphosphate: step 1/1. It participates in isoprenoid biosynthesis; isopentenyl diphosphate biosynthesis via DXP pathway; isopentenyl diphosphate from 1-deoxy-D-xylulose 5-phosphate: step 6/6. Its function is as follows. Catalyzes the conversion of 1-hydroxy-2-methyl-2-(E)-butenyl 4-diphosphate (HMBPP) into a mixture of isopentenyl diphosphate (IPP) and dimethylallyl diphosphate (DMAPP). Acts in the terminal step of the DOXP/MEP pathway for isoprenoid precursor biosynthesis. The protein is 4-hydroxy-3-methylbut-2-enyl diphosphate reductase of Clostridium perfringens (strain 13 / Type A).